A 174-amino-acid polypeptide reads, in one-letter code: Nascent polypeptide-associated complex subunit alpha (174 aa).

S2 carries the post-translational modification N-acetylserine. The NAC-A/B domain maps to 14-78 (NKNEKKAREL…AKVDNFTQKL (65 aa)). The disordered stretch occupies residues 85–137 (AQASGIMPSNEDVATKSPEDIQADMQAAAEGSVNAAAEEDDEEGEVDAGDLNK). A Phosphoserine modification is found at S93. Residues 111–120 (AAAEGSVNAA) are compositionally biased toward low complexity. Residues 121–132 (AEEDDEEGEVDA) show a composition bias toward acidic residues. A UBA domain is found at 135-174 (LNKDDIELVVQQTNVSKNQAIKALKAHNGDLVNAIMSLSK).

This sequence belongs to the NAC-alpha family. As to quaternary structure, part of the nascent polypeptide-associated complex (NAC), consisting of EGD2 and either EGD1 or BTT1. NAC associates with ribosomes via EGD1 or BTT1, and with the CCR4-NOT complex.

It is found in the cytoplasm. The protein resides in the nucleus. In terms of biological role, component of the nascent polypeptide-associated complex (NAC), a dynamic component of the ribosomal exit tunnel, protecting the emerging polypeptides from interaction with other cytoplasmic proteins to ensure appropriate nascent protein targeting. The NAC complex also promotes mitochondrial protein import by enhancing productive ribosome interactions with the outer mitochondrial membrane and blocks the inappropriate interaction of ribosomes translating non-secretory nascent polypeptides with translocation sites in the membrane of the endoplasmic reticulum. EGD2 may also be involved in transcription regulation. The polypeptide is Nascent polypeptide-associated complex subunit alpha (EGD2) (Saccharomyces cerevisiae (strain YJM789) (Baker's yeast)).